The following is a 444-amino-acid chain: Acyl-CoA 6-desaturase (444 aa).

Residues 1–131 (MGKGGNQGEG…DMNLFKTNHV (131 aa)) are Cytoplasmic-facing. Residues 18–95 (VPTFSWEEIQ…LKPLLIGELA (78 aa)) enclose the Cytochrome b5 heme-binding domain. Residues 132–152 (FFLLLLAHIIALESIAWFTVF) form a helical membrane-spanning segment. The Lumenal portion of the chain corresponds to 153–157 (YFGNG). The chain crosses the membrane as a helical span at residues 158 to 178 (WISTLITAFVLATSQAQAGWL). Residues 179–264 (QHDYGHLSVY…KYLPYNHQHE (86 aa)) are Cytoplasmic-facing. Positions 180–184 (HDYGH) match the Histidine box-1 motif. The short motif at 217–221 (HFQHH) is the Histidine box-2 element. The helical transmembrane segment at 265–285 (YFFLIGPPLLIPMYFQYQIIM) threads the bilayer. Residues 286 to 305 (TMIVHKNWVDLAWAISYYIR) lie on the Lumenal side of the membrane. A helical transmembrane segment spans residues 306-326 (FFITYIPFYGILGALLFLNFI). Residues 327 to 444 (RFLESHWFVW…KLWLDAYLHK (118 aa)) are Cytoplasmic-facing. The Histidine box-3 signature appears at 382 to 386 (QIEHH).

This sequence belongs to the fatty acid desaturase type 1 family.

Its subcellular location is the endoplasmic reticulum membrane. The enzyme catalyses (9Z,12Z)-octadecadienoyl-CoA + 2 Fe(II)-[cytochrome b5] + O2 + 2 H(+) = (6Z,9Z,12Z)-octadecatrienoyl-CoA + 2 Fe(III)-[cytochrome b5] + 2 H2O. It carries out the reaction (9Z,12Z,15Z)-octadecatrienoyl-CoA + 2 Fe(II)-[cytochrome b5] + O2 + 2 H(+) = (6Z,9Z,12Z,15Z)-octadecatetraenoyl-CoA + 2 Fe(III)-[cytochrome b5] + 2 H2O. It catalyses the reaction (9Z,12Z,15Z,18Z,21Z)-tetracosapentaenoyl-CoA + 2 Fe(II)-[cytochrome b5] + O2 + 2 H(+) = (6Z,9Z,12Z,15Z,18Z,21Z)-tetracosahexaenoyl-CoA + 2 Fe(III)-[cytochrome b5] + 2 H2O. The catalysed reaction is (11E)-octadecenoyl-CoA + 2 Fe(II)-[cytochrome b5] + O2 + 2 H(+) = (6Z,11E)-octadecadienoyl-CoA + 2 Fe(III)-[cytochrome b5] + 2 H2O. The enzyme catalyses (11Z,14Z)-eicosadienoyl-CoA + 2 Fe(II)-[cytochrome b5] + O2 + 2 H(+) = (8Z,11Z,14Z)-eicosatrienoyl-CoA + 2 Fe(III)-[cytochrome b5] + 2 H2O. It carries out the reaction (11Z,14Z,17Z)-eicosatrienoyl-CoA + 2 Fe(II)-[cytochrome b5] + O2 + 2 H(+) = (8Z,11Z,14Z,17Z)-eicosatetraenoyl-CoA + 2 Fe(III)-[cytochrome b5] + 2 H2O. Its pathway is lipid metabolism; polyunsaturated fatty acid biosynthesis. Involved in the biosynthesis of highly unsaturated fatty acids (HUFA) from the essential polyunsaturated fatty acids (PUFA) linoleic acid (LA) (18:2n-6) and alpha-linolenic acid (ALA) (18:3n-3) precursors, acting as a fatty acyl-coenzyme A (CoA) desaturase that introduces a cis double bond at carbon 6 of the fatty acyl chain. Catalyzes the first and rate limiting step in this pathway which is the desaturation of LA (18:2n-6) and ALA (18:3n-3) into gamma-linoleate (GLA) (18:3n-6) and stearidonate (18:4n-3), respectively. Subsequently, in the biosynthetic pathway of HUFA n-3 series, it desaturates tetracosapentaenoate (24:5n-3) to tetracosahexaenoate (24:6n-3), which is then converted to docosahexaenoate (DHA)(22:6n-3), an important lipid for nervous system function. It can also desaturate (11E)-octadecenoate (trans-vaccenoate) at carbon 6 generating (6Z,11E)-octadecadienoate. In addition to Delta-6 activity, this enzyme exhibits Delta-8 activity with slight biases toward n-3 fatty acyl-CoA substrates. This is Acyl-CoA 6-desaturase (FADS2) from Pongo abelii (Sumatran orangutan).